Here is a 479-residue protein sequence, read N- to C-terminus: Anaerobic nitric oxide reductase flavorubredoxin (479 aa).

Positions 30 to 210 (LRGSSYNSYL…PFSRLVTPKI (181 aa)) are zinc metallo-hydrolase. His79, Glu81, Asp83, His147, Asp166, and His227 together coordinate Fe cation. One can recognise a Flavodoxin-like domain in the interval 254-393 (ITIFYDTMSN…LCRQHGRDIA (140 aa)). Residues 260–264 (TMSNN) and 342–369 (AFGS…EMSL) contribute to the FMN site. One can recognise a Rubredoxin-like domain in the interval 423 to 474 (GPKMQCSVCQWIYDPALGEPLQDVAPGTPWSEVPDNFLCPECSLGKDVFDVL). Positions 428, 431, 461, and 464 each coordinate Fe cation.

It in the N-terminal section; belongs to the zinc metallo-hydrolase group 3 family. Homotetramer. Fe cation serves as cofactor. Requires FMN as cofactor.

The protein resides in the cytoplasm. It functions in the pathway nitrogen metabolism; nitric oxide reduction. Functionally, anaerobic nitric oxide reductase; uses NADH to detoxify nitric oxide (NO), protecting several 4Fe-4S NO-sensitive enzymes. Has at least 2 reductase partners, only one of which (NorW, flavorubredoxin reductase) has been identified. NO probably binds to the di-iron center; electrons enter from the NorW at rubredoxin and are transferred sequentially to the FMN center and the di-iron center. Also able to function as an aerobic oxygen reductase. The chain is Anaerobic nitric oxide reductase flavorubredoxin from Salmonella paratyphi A (strain ATCC 9150 / SARB42).